A 217-amino-acid polypeptide reads, in one-letter code: Ras-related protein RABA1f (217 aa).

20–27 (GDSGVGKS) contributes to the GTP binding site. Positions 42–50 (SKSTIGVEF) match the Effector region motif. GTP-binding positions include 68-72 (DTAGQ), 126-129 (NKAD), and 156-157 (SA). S-geranylgeranyl cysteine attachment occurs at residues Cys214 and Cys215.

This sequence belongs to the small GTPase superfamily. Rab family.

Its subcellular location is the cell membrane. Intracellular vesicle trafficking and protein transport. The polypeptide is Ras-related protein RABA1f (RABA1F) (Arabidopsis thaliana (Mouse-ear cress)).